Here is a 245-residue protein sequence, read N- to C-terminus: 1-(5-phosphoribosyl)-5-[(5-phosphoribosylamino)methylideneamino] imidazole-4-carboxamide isomerase (245 aa).

The active-site Proton acceptor is aspartate 7. Aspartate 129 functions as the Proton donor in the catalytic mechanism.

Belongs to the HisA/HisF family.

It localises to the cytoplasm. The enzyme catalyses 1-(5-phospho-beta-D-ribosyl)-5-[(5-phospho-beta-D-ribosylamino)methylideneamino]imidazole-4-carboxamide = 5-[(5-phospho-1-deoxy-D-ribulos-1-ylimino)methylamino]-1-(5-phospho-beta-D-ribosyl)imidazole-4-carboxamide. It participates in amino-acid biosynthesis; L-histidine biosynthesis; L-histidine from 5-phospho-alpha-D-ribose 1-diphosphate: step 4/9. In Shewanella sp. (strain W3-18-1), this protein is 1-(5-phosphoribosyl)-5-[(5-phosphoribosylamino)methylideneamino] imidazole-4-carboxamide isomerase.